Reading from the N-terminus, the 376-residue chain is tRNA-specific 2-thiouridylase MnmA (376 aa).

ATP contacts are provided by residues 9 to 16 (AMSGGIDS) and Met-35. Cys-105 acts as the Nucleophile in catalysis. A disulfide bond links Cys-105 and Cys-202. Residue Gly-129 participates in ATP binding. The segment at 151–153 (KDQ) is interaction with tRNA. The Cysteine persulfide intermediate role is filled by Cys-202. The segment at 312–313 (RY) is interaction with tRNA.

It belongs to the MnmA/TRMU family.

It is found in the cytoplasm. The enzyme catalyses S-sulfanyl-L-cysteinyl-[protein] + uridine(34) in tRNA + AH2 + ATP = 2-thiouridine(34) in tRNA + L-cysteinyl-[protein] + A + AMP + diphosphate + H(+). Catalyzes the 2-thiolation of uridine at the wobble position (U34) of tRNA, leading to the formation of s(2)U34. In Amoebophilus asiaticus (strain 5a2), this protein is tRNA-specific 2-thiouridylase MnmA.